A 231-amino-acid polypeptide reads, in one-letter code: Probable pyridoxamine 5'-phosphate oxidase (231 aa).

Residue Q20–K23 participates in pyridoxal 5'-phosphate binding. R74 to L77 contacts FMN. K79 contributes to the pyridoxal 5'-phosphate binding site. Residues F89–T90, K96–K97, and Q119 contribute to the FMN site. Residues Y137, R141, and S145 each coordinate pyridoxal 5'-phosphate. FMN-binding positions include Q154–S155 and W202. R208 to H210 lines the pyridoxal 5'-phosphate pocket. Residue R212 coordinates FMN.

This sequence belongs to the pyridoxamine 5'-phosphate oxidase family. As to quaternary structure, homodimer. Requires FMN as cofactor.

The enzyme catalyses pyridoxamine 5'-phosphate + O2 + H2O = pyridoxal 5'-phosphate + H2O2 + NH4(+). The catalysed reaction is pyridoxine 5'-phosphate + O2 = pyridoxal 5'-phosphate + H2O2. The protein operates within cofactor metabolism; pyridoxal 5'-phosphate salvage; pyridoxal 5'-phosphate from pyridoxamine 5'-phosphate: step 1/1. It participates in cofactor metabolism; pyridoxal 5'-phosphate salvage; pyridoxal 5'-phosphate from pyridoxine 5'-phosphate: step 1/1. In terms of biological role, catalyzes the oxidation of either pyridoxine 5'-phosphate (PNP) or pyridoxamine 5'-phosphate (PMP) into pyridoxal 5'-phosphate (PLP). The chain is Probable pyridoxamine 5'-phosphate oxidase from Schizosaccharomyces pombe (strain 972 / ATCC 24843) (Fission yeast).